The following is a 545-amino-acid chain: Chaperonin GroEL 2 (545 aa).

ATP contacts are provided by residues 29 to 32 (TLGP), 86 to 90 (DGTTT), G413, 479 to 481 (NAA), and D495.

Belongs to the chaperonin (HSP60) family. In terms of assembly, forms a cylinder of 14 subunits composed of two heptameric rings stacked back-to-back. Interacts with the co-chaperonin GroES.

It is found in the cytoplasm. The catalysed reaction is ATP + H2O + a folded polypeptide = ADP + phosphate + an unfolded polypeptide.. Functionally, together with its co-chaperonin GroES, plays an essential role in assisting protein folding. The GroEL-GroES system forms a nano-cage that allows encapsulation of the non-native substrate proteins and provides a physical environment optimized to promote and accelerate protein folding. The chain is Chaperonin GroEL 2 from Prochlorococcus marinus (strain SARG / CCMP1375 / SS120).